Reading from the N-terminus, the 241-residue chain is DNA repair protein RecO (241 aa).

The protein belongs to the RecO family.

Its function is as follows. Involved in DNA repair and RecF pathway recombination. The chain is DNA repair protein RecO from Orientia tsutsugamushi (strain Ikeda) (Rickettsia tsutsugamushi).